A 361-amino-acid polypeptide reads, in one-letter code: MTATWSVNKKIFLQNAITVKNNQPLMAVVKNNAYHYDLEFAVTQFIHAGIDTFSTTSLREAIQIRQLAPDATIFLMNAVYEFDLVREHQIHMTLPSLTYYYNHKNDLAGIHVHLEFENLLHRSGFKDLNEIKEVLKDHHHNQNAKMIISGLWTHFGYADEFDVSDYNVERSQWMEIVEALLSEGYQFDLIHAQNSASFYREGQILLPHHTHARVGIALYGSRPYSSLNQHDIVQSLTVKAHVIQVREVQAGDYCGYSFAFEVTKNNTKLAVVDIGYGDGILRTRAKHEALINGKRYPIRALMMSHMFVEVDGNVHAQDEVILYNNDIRIDEYTFKGVGANSEQLSAMNHDSLKKEYISNDC.

The Proton acceptor; specific for D-alanine role is filled by Lys30. Lys30 carries the post-translational modification N6-(pyridoxal phosphate)lysine. A substrate-binding site is contributed by Arg122. Catalysis depends on Tyr256, which acts as the Proton acceptor; specific for L-alanine. Residue Met303 coordinates substrate.

The protein belongs to the alanine racemase family. It depends on pyridoxal 5'-phosphate as a cofactor.

It carries out the reaction L-alanine = D-alanine. It functions in the pathway amino-acid biosynthesis; D-alanine biosynthesis; D-alanine from L-alanine: step 1/1. Functionally, catalyzes the interconversion of L-alanine and D-alanine. May also act on other amino acids. The chain is Alanine racemase 2 (alr2) from Staphylococcus aureus (strain Mu50 / ATCC 700699).